The primary structure comprises 1150 residues: PAN2-PAN3 deadenylation complex catalytic subunit PAN2 (1150 aa).

4 WD repeats span residues 26 to 67 (AHHS…MEFQ), 114 to 156 (GHVN…ITKE), 158 to 194 (PAPNHYFLMKKSKYICAASRNGCVDILDPITLKVINT), and 290 to 328 (GHTHLALFDVSPSGQAMVFTDTEGYIHVWGPTSKAVSFV). The interval 326–471 (SFVDQGLPVE…IRTDIESLKS (146 aa)) is linker. One can recognise a USP domain in the interval 472–862 (VVPNMYHLFE…TPLVVMFQLK (391 aa)). The Exonuclease domain maps to 911–1079 (AIDAEFVLAK…HDSIEDANTA (169 aa)). The a divalent metal cation site is built by Asp-913, Glu-915, Asp-1022, and Asp-1075. The disordered stretch occupies residues 1118-1150 (GQSAQRTETPPMVDDAQPGALLPYQPPELLQGS).

Belongs to the peptidase C19 family. PAN2 subfamily. In terms of assembly, forms a heterotrimer with an asymmetric homodimer of the regulatory subunit PAN3 to form the poly(A)-nuclease (PAN) deadenylation complex. It depends on a divalent metal cation as a cofactor.

It localises to the cytoplasm. It carries out the reaction Exonucleolytic cleavage of poly(A) to 5'-AMP.. With respect to regulation, positively regulated by the regulatory subunit PAN3. Its function is as follows. Catalytic subunit of the poly(A)-nuclease (PAN) deadenylation complex, one of two cytoplasmic mRNA deadenylases involved in mRNA turnover. PAN specifically shortens poly(A) tails of RNA and the activity is stimulated by poly(A)-binding protein PAB1. PAN deadenylation is followed by rapid degradation of the shortened mRNA tails by the CCR4-NOT complex. Deadenylated mRNAs are then degraded by two alternative mechanisms, namely exosome-mediated 3'-5' exonucleolytic degradation, or deadenylation-dependent mRNA decaping and subsequent 5'-3' exonucleolytic degradation by XRN1. May also be involved in post-transcriptional maturation of mRNA poly(A) tails. This chain is PAN2-PAN3 deadenylation complex catalytic subunit PAN2, found in Pyricularia oryzae (strain 70-15 / ATCC MYA-4617 / FGSC 8958) (Rice blast fungus).